The following is a 338-amino-acid chain: Nicotinate-nucleotide--dimethylbenzimidazole phosphoribosyltransferase (338 aa).

The Proton acceptor role is filled by E305.

It belongs to the CobT family.

The enzyme catalyses 5,6-dimethylbenzimidazole + nicotinate beta-D-ribonucleotide = alpha-ribazole 5'-phosphate + nicotinate + H(+). The protein operates within nucleoside biosynthesis; alpha-ribazole biosynthesis; alpha-ribazole from 5,6-dimethylbenzimidazole: step 1/2. Functionally, catalyzes the synthesis of alpha-ribazole-5'-phosphate from nicotinate mononucleotide (NAMN) and 5,6-dimethylbenzimidazole (DMB). The chain is Nicotinate-nucleotide--dimethylbenzimidazole phosphoribosyltransferase from Sinorhizobium fredii (strain NBRC 101917 / NGR234).